Consider the following 209-residue polypeptide: Orotate phosphoribosyltransferase (209 aa).

Residues R96, K100, H102, and 122–130 (EDLISTGGS) each bind 5-phospho-alpha-D-ribose 1-diphosphate. An orotate-binding site is contributed by S126.

Belongs to the purine/pyrimidine phosphoribosyltransferase family. PyrE subfamily. In terms of assembly, homodimer. Requires Mg(2+) as cofactor.

It carries out the reaction orotidine 5'-phosphate + diphosphate = orotate + 5-phospho-alpha-D-ribose 1-diphosphate. The protein operates within pyrimidine metabolism; UMP biosynthesis via de novo pathway; UMP from orotate: step 1/2. In terms of biological role, catalyzes the transfer of a ribosyl phosphate group from 5-phosphoribose 1-diphosphate to orotate, leading to the formation of orotidine monophosphate (OMP). This Lactococcus lactis subsp. cremoris (strain MG1363) protein is Orotate phosphoribosyltransferase.